The following is a 457-amino-acid chain: Ribosomal RNA-processing protein 8 (457 aa).

2 disordered regions span residues 52–114 (LSQQ…EVER) and 148–235 (SLNS…QETR). Residues S62, S64, and S105 each carry the phosphoserine modification. The span at 148–165 (SLNSVDQTVHNSRTSTAT) shows a compositional bias: polar residues. 2 positions are modified to phosphoserine: S172 and S177. Residues 174 to 183 (ESASPNSSHT) show a composition bias toward polar residues. Basic residues predominate over residues 184 to 203 (LSRKQWRNRQKNKRRHKNKF). Positions 282, 317, 335, 347, 348, and 364 each coordinate S-adenosyl-L-methionine.

Belongs to the methyltransferase superfamily. RRP8 family. Component of the eNoSC complex, composed of SIRT1, SUV39H1 and RRP8.

It is found in the nucleus. The protein resides in the nucleolus. Essential component of the eNoSC (energy-dependent nucleolar silencing) complex, a complex that mediates silencing of rDNA in response to intracellular energy status and acts by recruiting histone-modifying enzymes. The eNoSC complex is able to sense the energy status of cell: upon glucose starvation, elevation of NAD(+)/NADP(+) ratio activates SIRT1, leading to histone H3 deacetylation followed by dimethylation of H3 at 'Lys-9' (H3K9me2) by SUV39H1 and the formation of silent chromatin in the rDNA locus. In the complex, RRP8 binds to H3K9me2 and probably acts as a methyltransferase. Its substrates are however unknown. The sequence is that of Ribosomal RNA-processing protein 8 (Rrp8) from Rattus norvegicus (Rat).